We begin with the raw amino-acid sequence, 860 residues long: Rod cGMP-specific 3',5'-cyclic phosphodiesterase subunit alpha (860 aa).

An N-acetylglycine modification is found at glycine 2. GAF domains are found at residues 73-222 (QTEK…NLIM) and 254-431 (DIER…GWSV). The region spanning 483–816 (EEEELAEILQ…KEWKALADEY (334 aa)) is the PDEase domain. Histidine 559 acts as the Proton donor in catalysis. Histidine 563, histidine 599, aspartate 600, and aspartate 720 together coordinate a divalent metal cation. A disordered region spans residues 821–860 (KVQEEKKQKQQSAKSAAAGNQPGGNPSPGGATTSKSCCIQ). Residues 830–851 (QQSAKSAAAGNQPGGNPSPGGA) show a composition bias toward low complexity. At cysteine 857 the chain carries Cysteine methyl ester. Residue cysteine 857 is the site of S-farnesyl cysteine attachment. Residues 858–860 (CIQ) constitute a propeptide, removed in mature form.

The protein belongs to the cyclic nucleotide phosphodiesterase family. Oligomer composed of two catalytic chains (alpha and beta), an inhibitory chain (gamma) and the delta chain. A divalent metal cation is required as a cofactor.

The protein localises to the cell membrane. The protein resides in the cell projection. It is found in the cilium. Its subcellular location is the photoreceptor outer segment. It catalyses the reaction 3',5'-cyclic GMP + H2O = GMP + H(+). Rod-specific cGMP phosphodiesterase that catalyzes the hydrolysis of 3',5'-cyclic GMP. This protein participates in processes of transmission and amplification of the visual signal. This is Rod cGMP-specific 3',5'-cyclic phosphodiesterase subunit alpha from Homo sapiens (Human).